A 154-amino-acid polypeptide reads, in one-letter code: Protein X (154 aa).

Residues 28-48 form a disordered region; it reads RPLPGPLGTLPPASPPAVPTD. A mitochondrial targeting sequence region spans residues 68-117; the sequence is PCALRFTSARRMETTVNAHGNLPKVLHKRTLGLSAMSTTDLEAYFKDCVF.

This sequence belongs to the orthohepadnavirus protein X family. May form homodimer. May interact with host CEBPA, CFLAR, CREB1, DDB1, E4F1, HBXIP, HSPD1/HSP60, NFKBIA, POLR2E and SMAD4. Interacts with host SMC5-SMC6 complex and induces its degradation. Interacts with host TRPC4AP; leading to prevent ubiquitination of TRPC4AP. Interacts with host PLSCR1; this interaction promotes ubiquitination and degradation of HBx and impairs HBx-mediated cell proliferation. In terms of processing, a fraction may be phosphorylated in insect cells and HepG2 cells, a human hepatoblastoma cell line. Phosphorylated in vitro by host protein kinase C or mitogen-activated protein kinase. N-acetylated in insect cells.

Its subcellular location is the host cytoplasm. It localises to the host nucleus. The protein localises to the host mitochondrion. Functionally, multifunctional protein that plays a role in silencing host antiviral defenses and promoting viral transcription. Does not seem to be essential for HBV infection. May be directly involved in development of cirrhosis and liver cancer (hepatocellular carcinoma). Most of cytosolic activities involve modulation of cytosolic calcium. The effect on apoptosis is controversial depending on the cell types in which the studies have been conducted. May induce apoptosis by localizing in mitochondria and causing loss of mitochondrial membrane potential. May also modulate apoptosis by binding host CFLAR, a key regulator of the death-inducing signaling complex (DISC). Promotes viral transcription by using the host E3 ubiquitin ligase DDB1 to target the SMC5-SMC6 complex to proteasomal degradation. This host complex would otherwise bind to viral episomal DNA, and prevents its transcription. Moderately stimulates transcription of many different viral and cellular transcription elements. Promoters and enhancers stimulated by HBx contain DNA binding sites for NF-kappa-B, AP-1, AP-2, c-EBP, ATF/CREB, or the calcium-activated factor NF-AT. The protein is Protein X of Hepatitis B virus genotype B2 subtype adw (isolate China/patient4/1996) (HBV-B).